Reading from the N-terminus, the 466-residue chain is Soluble pyridine nucleotide transhydrogenase (466 aa).

36-45 (ERYHNVGGGC) contributes to the FAD binding site.

This sequence belongs to the class-I pyridine nucleotide-disulfide oxidoreductase family. FAD is required as a cofactor.

It is found in the cytoplasm. The enzyme catalyses NAD(+) + NADPH = NADH + NADP(+). Conversion of NADPH, generated by peripheral catabolic pathways, to NADH, which can enter the respiratory chain for energy generation. This Klebsiella pneumoniae subsp. pneumoniae (strain ATCC 700721 / MGH 78578) protein is Soluble pyridine nucleotide transhydrogenase.